We begin with the raw amino-acid sequence, 241 residues long: tRNA pseudouridine synthase A (241 aa).

Catalysis depends on Asp51, which acts as the Nucleophile. Tyr110 contacts substrate.

It belongs to the tRNA pseudouridine synthase TruA family. As to quaternary structure, homodimer.

The enzyme catalyses uridine(38/39/40) in tRNA = pseudouridine(38/39/40) in tRNA. Its function is as follows. Formation of pseudouridine at positions 38, 39 and 40 in the anticodon stem and loop of transfer RNAs. This is tRNA pseudouridine synthase A from Campylobacter jejuni subsp. doylei (strain ATCC BAA-1458 / RM4099 / 269.97).